The chain runs to 258 residues: UPF0246 protein CJA_0191 (258 aa).

Belongs to the UPF0246 family.

The chain is UPF0246 protein CJA_0191 from Cellvibrio japonicus (strain Ueda107) (Pseudomonas fluorescens subsp. cellulosa).